Reading from the N-terminus, the 356-residue chain is MRFDLERPSQNATSHRVAVLLINLGTPDAPTPRAVRRYLAQFLSDPRVVEIPALLWQIILRLLILPFRGSASAKKYAAVWMPEGSPLRVYTEKQVEGLRHLLQLNDYTVLVDYAMRYGTPGIPAMLNQLKLAGAERVLLMPMYPQYSSSTTATAFDDAFSALKRMRNQPEIRTVRQYADHPAYIAALAAQVHQYWHQHGRPDFAAGDKLVLSFHGVPKRTLDLGDPYHEQCQQTGALLMQALELTPVECRITFQSRFGKAEWLQPYTAPTLKELGAAGVRRADVFCPGFTADCLETIEEIGMEVRDEFLHAGGKDFHRIPCLNASQAWIAALGEIVAQNLQGWPVQALPVPHTTGA.

Fe cation contacts are provided by H214 and E295.

Belongs to the ferrochelatase family.

It localises to the cytoplasm. It catalyses the reaction heme b + 2 H(+) = protoporphyrin IX + Fe(2+). Its pathway is porphyrin-containing compound metabolism; protoheme biosynthesis; protoheme from protoporphyrin-IX: step 1/1. Catalyzes the ferrous insertion into protoporphyrin IX. The chain is Ferrochelatase from Paraburkholderia xenovorans (strain LB400).